The primary structure comprises 504 residues: MAVKLQADEISSIIKERIENFEIDVDINEIGKVVGIADGITTVYGLNNVMAGEVVEFDNGAKGLVLNLEEANVGVVVLGTSAGIKEGMSVKRSGALLKTPVGDGLMGRVVNPLGDPIDGKGTIETAEYRFIEEKAPGIMARKSVHEPLQTGIKAIDALVPVGRGQRELIIGDRQTGKTTLAIDTIINQKGQDVVCIYVAIGQKQSTVAATVKKLEEHGALDYTIIVNAGASDSAALQFLAPYAGVTMAEYFRDNGRHAVIFYDDLSKHAVAYREMSLILRRPPGREAYPGDVFYLHSRLLERAAKLSDELGAGSITAFPIIETQAGDVAAYIPTNVISITDGQIFLETDLFNSGIRPAINVGLSVSRVGGAAQIKAIKQVSGTLRLDLASFRELQAFAQFASDLDDYTRSQLERGQRMVEVLKQGPYVPVPVEKQVVIIFAGANGYLDDIAASSVTKFEAELMPFMEAKYASVLDAIRNEKKISDDTDAQLRKAIEDFKTSFAG.

Position 171-178 (Gly171–Thr178) interacts with ATP.

This sequence belongs to the ATPase alpha/beta chains family. F-type ATPases have 2 components, CF(1) - the catalytic core - and CF(0) - the membrane proton channel. CF(1) has five subunits: alpha(3), beta(3), gamma(1), delta(1), epsilon(1). CF(0) has three main subunits: a(1), b(2) and c(9-12). The alpha and beta chains form an alternating ring which encloses part of the gamma chain. CF(1) is attached to CF(0) by a central stalk formed by the gamma and epsilon chains, while a peripheral stalk is formed by the delta and b chains.

Its subcellular location is the cell inner membrane. The enzyme catalyses ATP + H2O + 4 H(+)(in) = ADP + phosphate + 5 H(+)(out). Its function is as follows. Produces ATP from ADP in the presence of a proton gradient across the membrane. The alpha chain is a regulatory subunit. This chain is ATP synthase subunit alpha, found in Sulfurovum sp. (strain NBC37-1).